Consider the following 284-residue polypeptide: 2-dehydro-3-deoxyphosphooctonate aldolase (284 aa).

This sequence belongs to the KdsA family.

Its subcellular location is the cytoplasm. The catalysed reaction is D-arabinose 5-phosphate + phosphoenolpyruvate + H2O = 3-deoxy-alpha-D-manno-2-octulosonate-8-phosphate + phosphate. Its pathway is carbohydrate biosynthesis; 3-deoxy-D-manno-octulosonate biosynthesis; 3-deoxy-D-manno-octulosonate from D-ribulose 5-phosphate: step 2/3. It functions in the pathway bacterial outer membrane biogenesis; lipopolysaccharide biosynthesis. The sequence is that of 2-dehydro-3-deoxyphosphooctonate aldolase from Photobacterium profundum (strain SS9).